We begin with the raw amino-acid sequence, 23 residues long: Retinol-binding protein 3 (23 aa).

The protein localises to the secreted. The protein resides in the extracellular space. Its subcellular location is the extracellular matrix. It is found in the interphotoreceptor matrix. Functionally, IRBP shuttles 11-cis and all trans retinoids between the retinol isomerase in the pigment epithelium and the visual pigments in the photoreceptor cells of the retina. In Oryctolagus cuniculus (Rabbit), this protein is Retinol-binding protein 3 (RBP3).